The following is a 219-amino-acid chain: Urease accessory protein UreG (219 aa).

A disordered region spans residues 1-20 (MSALHSIPHRSKKLPPLRVG). Position 23-30 (23-30 (GPVGSGKT)) interacts with GTP.

The protein belongs to the SIMIBI class G3E GTPase family. UreG subfamily. As to quaternary structure, homodimer. UreD, UreF and UreG form a complex that acts as a GTP-hydrolysis-dependent molecular chaperone, activating the urease apoprotein by helping to assemble the nickel containing metallocenter of UreC. The UreE protein probably delivers the nickel.

It is found in the cytoplasm. Facilitates the functional incorporation of the urease nickel metallocenter. This process requires GTP hydrolysis, probably effectuated by UreG. This is Urease accessory protein UreG from Methylibium petroleiphilum (strain ATCC BAA-1232 / LMG 22953 / PM1).